Here is a 181-residue protein sequence, read N- to C-terminus: Large ribosomal subunit protein uL5 (181 aa).

The protein belongs to the universal ribosomal protein uL5 family. Part of the 50S ribosomal subunit; part of the 5S rRNA/L5/L18/L25 subcomplex. Contacts the 5S rRNA and the P site tRNA. Forms a bridge to the 30S subunit in the 70S ribosome.

Functionally, this is one of the proteins that bind and probably mediate the attachment of the 5S RNA into the large ribosomal subunit, where it forms part of the central protuberance. In the 70S ribosome it contacts protein S13 of the 30S subunit (bridge B1b), connecting the 2 subunits; this bridge is implicated in subunit movement. Contacts the P site tRNA; the 5S rRNA and some of its associated proteins might help stabilize positioning of ribosome-bound tRNAs. In Baumannia cicadellinicola subsp. Homalodisca coagulata, this protein is Large ribosomal subunit protein uL5.